The sequence spans 431 residues: Divergent protein kinase domain 1B (431 aa).

Over 1–30 the chain is Cytoplasmic; sequence MRRLRRLAHLVLFCPFSKRLQGRLPGLRVR. The May mediate ER retention motif lies at 5–6; the sequence is RR. Residues 31 to 51 form a helical membrane-spanning segment; that stretch reads CIFLAWLGVFAGSWLVYVHYS. Topologically, residues 52–431 are lumenal; sequence SYSERCRGHV…WKKISNTKYS (380 aa). Disulfide bonds link Cys57-Cys94 and Cys62-Cys117.

The protein belongs to the DIPK family. Post-translationally, among the many cysteines in the lumenal domain, most are probably involved in disulfide bonds.

It localises to the endoplasmic reticulum membrane. The polypeptide is Divergent protein kinase domain 1B (Homo sapiens (Human)).